Reading from the N-terminus, the 255-residue chain is 3-oxoacyl-[acyl-carrier-protein] reductase MabA (255 aa).

NADP(+) is bound by residues 32–35 (NRGI), Arg55, 69–70 (DV), Gly98, Tyr161, Lys165, Ile194, and Arg205. Catalysis depends on Tyr161, which acts as the Proton acceptor.

The protein belongs to the short-chain dehydrogenases/reductases (SDR) family. As to quaternary structure, homotetramer.

The protein localises to the secreted. It localises to the cell wall. The enzyme catalyses a (3R)-hydroxyacyl-[ACP] + NADP(+) = a 3-oxoacyl-[ACP] + NADPH + H(+). It carries out the reaction a (3R)-3-hydroxyacyl-CoA + NADP(+) = a 3-oxoacyl-CoA + NADPH + H(+). It catalyses the reaction (3R)-3-hydroxybutanoyl-CoA + NADP(+) = acetoacetyl-CoA + NADPH + H(+). The catalysed reaction is (3R)-hydroxyoctanoyl-CoA + NADP(+) = 3-oxooctanoyl-CoA + NADPH + H(+). Its pathway is lipid metabolism; mycolic acid biosynthesis. Functionally, part of the mycobacterial fatty acid elongation system FAS-II, which is involved in mycolic acid biosynthesis. Catalyzes the NADPH-dependent reduction of beta-ketoacyl derivatives, the second step of the FAS-II elongation cycle. Has a preference for longer substrates. Can use CoA derivatives as substrates in vitro. This is 3-oxoacyl-[acyl-carrier-protein] reductase MabA from Mycolicibacterium smegmatis (strain ATCC 700084 / mc(2)155) (Mycobacterium smegmatis).